The sequence spans 150 residues: D-aminoacyl-tRNA deacylase (150 aa).

The Gly-cisPro motif, important for rejection of L-amino acids motif lies at 138–139; the sequence is GP.

This sequence belongs to the DTD family. As to quaternary structure, homodimer.

It localises to the cytoplasm. It carries out the reaction glycyl-tRNA(Ala) + H2O = tRNA(Ala) + glycine + H(+). It catalyses the reaction a D-aminoacyl-tRNA + H2O = a tRNA + a D-alpha-amino acid + H(+). In terms of biological role, an aminoacyl-tRNA editing enzyme that deacylates mischarged D-aminoacyl-tRNAs. Also deacylates mischarged glycyl-tRNA(Ala), protecting cells against glycine mischarging by AlaRS. Acts via tRNA-based rather than protein-based catalysis; rejects L-amino acids rather than detecting D-amino acids in the active site. By recycling D-aminoacyl-tRNA to D-amino acids and free tRNA molecules, this enzyme counteracts the toxicity associated with the formation of D-aminoacyl-tRNA entities in vivo and helps enforce protein L-homochirality. The sequence is that of D-aminoacyl-tRNA deacylase from Dechloromonas aromatica (strain RCB).